Consider the following 364-residue polypeptide: MNQHTPAAALACAGLLGYCRAGFEKELAAELDDIAAEAGLIGYVRAEPDSGYVIYETFEPTPLGSFGESTDWRRPVFARQLLPWFARVDDLPERDRATPIVEAVKASGQRFSGVMLETPDTDEAKQRSGFCKRFTEPLAKALEKAGCLRSSRAGLPVLHVLFTSATTAWLAAGQPGQCSTWPMGIPRVRMPSNAPSRSTAKLSEAFMMLLEEGERDSILRAGQRAVDLGAAPGGWTWQLVNRGLRVTAIDNGPLRDSVMATEMVEHLKADGFTWRPHRPVDWMVCDMVEQPSRIASLMAEWVATGRCRYTIFNLKLPMKRRVEAVEQCRELIRKRLASVGPYDLRIKHLYHDREEVTAFLTLKR.

S-adenosyl-L-methionine contacts are provided by residues serine 198, 231-234 (APGG), aspartate 250, aspartate 270, and aspartate 286. The Proton acceptor role is filled by lysine 315.

Belongs to the class I-like SAM-binding methyltransferase superfamily. RNA methyltransferase RlmE family. RlmM subfamily. As to quaternary structure, monomer.

The protein localises to the cytoplasm. It catalyses the reaction cytidine(2498) in 23S rRNA + S-adenosyl-L-methionine = 2'-O-methylcytidine(2498) in 23S rRNA + S-adenosyl-L-homocysteine + H(+). Functionally, catalyzes the 2'-O-methylation at nucleotide C2498 in 23S rRNA. The polypeptide is Ribosomal RNA large subunit methyltransferase M (Thauera aminoaromatica).